A 367-amino-acid chain; its full sequence is Methylated-thiol--coenzyme M methyltransferase (367 aa).

Positions 236, 238, and 313 each coordinate Zn(2+).

It belongs to the uroporphyrinogen decarboxylase family. As to quaternary structure, homodimer. Zn(2+) serves as cofactor.

It carries out the reaction methanethiol + coenzyme M = methyl-coenzyme M + hydrogen sulfide + H(+). Functionally, methyltransferase involved in methanogenesis from methylated-thiols. Catalyzes two successive steps: mediates the transfer of a methyl group from the substrate to the cobalt cofactor of a methylated-thiol-specific corrinoid protein (MtsB), and the subsequent transfer of the methyl group from the corrinoid protein to coenzyme M. The polypeptide is Methylated-thiol--coenzyme M methyltransferase (mtsA) (Methanosarcina mazei (strain ATCC BAA-159 / DSM 3647 / Goe1 / Go1 / JCM 11833 / OCM 88) (Methanosarcina frisia)).